The chain runs to 264 residues: uncharacterized protein (264 aa).

The next 8 helical transmembrane spans lie at 19–39, 42–62, 69–89, 100–120, 136–156, 160–180, 192–212, and 223–243; these read LFPA…LPFL, YDWL…SGLE, VITL…HMGS, IFGV…YLCQ, FAVV…HFSI, WWLS…YEVN, FILI…FGAW, and LVHL…FLIV.

Its subcellular location is the cell membrane. This is an uncharacterized protein from Bacillus subtilis (strain 168).